The primary structure comprises 127 residues: Holo-[acyl-carrier-protein] synthase (127 aa).

Mg(2+) is bound by residues D9 and E58.

The protein belongs to the P-Pant transferase superfamily. AcpS family. The cofactor is Mg(2+).

It is found in the cytoplasm. It catalyses the reaction apo-[ACP] + CoA = holo-[ACP] + adenosine 3',5'-bisphosphate + H(+). In terms of biological role, transfers the 4'-phosphopantetheine moiety from coenzyme A to a Ser of acyl-carrier-protein. The polypeptide is Holo-[acyl-carrier-protein] synthase (Shewanella oneidensis (strain ATCC 700550 / JCM 31522 / CIP 106686 / LMG 19005 / NCIMB 14063 / MR-1)).